We begin with the raw amino-acid sequence, 172 residues long: R-phycocyanin beta subunit (172 aa).

Asn-72 bears the N4-methylasparagine mark. Cys-82 lines the (2R,3E)-phycocyanobilin pocket. Cys-153 contacts (2R,3E)-phycoerythrobilin.

Belongs to the phycobiliprotein family. In terms of assembly, heterodimer of an alpha and a beta subunit, which further assembles into trimers and the trimers into hexamers. Contains two covalently linked bilin chromophores.

The protein localises to the cellular thylakoid membrane. Light-harvesting photosynthetic bile pigment-protein from the phycobiliprotein complex (phycobilisome, PBS). Phycocyanin is the major phycobiliprotein in the PBS rod. The protein is R-phycocyanin beta subunit (rpcB) of Synechococcus sp. (strain WH7803).